A 605-amino-acid polypeptide reads, in one-letter code: Probable potassium transport system protein Kup (605 aa).

The next 12 membrane-spanning stretches (helical) occupy residues 17–37, 45–65, 96–116, 140–160, 165–185, 211–231, 246–266, 286–306, 338–358, 367–387, 394–414, and 417–437; these read GLVF…IFAL, VFGI…VEYA, IAFV…DGVI, LGTL…FQFK, VAAA…VSGL, GISA…GEAL, AWYF…AFAL, LYIP…QALI, IYIG…MLIF, AYGL…TIIF, WKVP…ISNL, and LPHG…TILI.

This sequence belongs to the HAK/KUP transporter (TC 2.A.72) family.

It localises to the cell inner membrane. The catalysed reaction is K(+)(in) + H(+)(in) = K(+)(out) + H(+)(out). Its function is as follows. Transport of potassium into the cell. Likely operates as a K(+):H(+) symporter. The polypeptide is Probable potassium transport system protein Kup (Geotalea uraniireducens (strain Rf4) (Geobacter uraniireducens)).